The following is a 649-amino-acid chain: 1-deoxy-D-xylulose-5-phosphate synthase (649 aa).

Thiamine diphosphate is bound by residues His-73 and 114-116 (SHA). Residue Asp-145 coordinates Mg(2+). Residues 146-147 (GA), Asn-175, Tyr-286, and Glu-367 each bind thiamine diphosphate. Asn-175 provides a ligand contact to Mg(2+).

The protein belongs to the transketolase family. DXPS subfamily. In terms of assembly, homodimer. The cofactor is Mg(2+). Thiamine diphosphate serves as cofactor.

The enzyme catalyses D-glyceraldehyde 3-phosphate + pyruvate + H(+) = 1-deoxy-D-xylulose 5-phosphate + CO2. It participates in metabolic intermediate biosynthesis; 1-deoxy-D-xylulose 5-phosphate biosynthesis; 1-deoxy-D-xylulose 5-phosphate from D-glyceraldehyde 3-phosphate and pyruvate: step 1/1. In terms of biological role, catalyzes the acyloin condensation reaction between C atoms 2 and 3 of pyruvate and glyceraldehyde 3-phosphate to yield 1-deoxy-D-xylulose-5-phosphate (DXP). This Rhodococcus jostii (strain RHA1) protein is 1-deoxy-D-xylulose-5-phosphate synthase.